Here is a 1116-residue protein sequence, read N- to C-terminus: Error-prone DNA polymerase 1 (1116 aa).

It belongs to the DNA polymerase type-C family. DnaE2 subfamily.

It localises to the cytoplasm. It catalyses the reaction DNA(n) + a 2'-deoxyribonucleoside 5'-triphosphate = DNA(n+1) + diphosphate. Functionally, DNA polymerase involved in damage-induced mutagenesis and translesion synthesis (TLS). It is not the major replicative DNA polymerase. This chain is Error-prone DNA polymerase 1, found in Rhizobium meliloti (strain 1021) (Ensifer meliloti).